Consider the following 758-residue polypeptide: MTTLHFSGFPRVGAFRELKFAQEKYWRKEISEQELLAVAKDLREKNWKHQVAANADFVAVGDFTFYDHILDLQVATGAIPARFGFDSQNLSLEQFFQLARGNKDQFAIEMTKWFDTNYHYLVPEFHADTEFKANAKHYVQQLQEAQALGLKAKPTVVGPLTFLWVGKEKGAVEFDRLSLLPKLLPVYVEILTALVEAGAEWIQIDEPALAVDLPKEWVEAYKDVYATLSKVSAKILLSTYFGSVAEHAALLKALPVDGLHIDLVRAPEQLDAFADYDKVLSAGVIDGRNIWRANLNKVLETVEPLQAKLGDRLWISSSCSLLHTPFDLSVEEKLKANKPDLYSWLAFTLQKTQELRVLKAALNEGRDSVAEELAASQAAADSRANSSEIHRADVAKRLADLPANADQRKSPFADRIKAQQAWLNLPLLPTTNIGSFPQTTEIRQARSAFKKGELSAADYEAAMKKEIALVVEEQEKLDLDVLVHGEAERNDMVEYFGELLSGFAFTQYGWVQSYGSRCVKPPIIFGDVSRPEAMTVAWSTYAQSLTKRPMKGMLTGPVTILQWSFVRNDIPRSTVCKQIALALNDEVLDLEKAGIKVIQIDEPAIREGLPLKRADWDAYLNWAGESFRLSSAGCEDSTQIHTHMCYSEFNDILPAIAAMDADVITIETSRSDMELLTAFGEFQYPNDIGPGVYDIHSPRVPTEAEVEHLLRKAIEVVPVERLWVNPDCGLKTRGWKETLEQLQVMMNVTRKLRAELAK.

Residues 16 to 19 and lysine 112 contribute to the 5-methyltetrahydropteroyltri-L-glutamate site; that span reads RELK. L-homocysteine is bound by residues 433–435 and glutamate 486; that span reads IGS. Residues 433–435 and glutamate 486 contribute to the L-methionine site; that span reads IGS. Residues 517 to 518 and tryptophan 563 contribute to the 5-methyltetrahydropteroyltri-L-glutamate site; that span reads RC. Aspartate 601 is a binding site for L-homocysteine. L-methionine is bound at residue aspartate 601. Glutamate 607 is a binding site for 5-methyltetrahydropteroyltri-L-glutamate. Histidine 643, cysteine 645, and glutamate 667 together coordinate Zn(2+). The active-site Proton donor is the histidine 696. Cysteine 728 contributes to the Zn(2+) binding site.

The protein belongs to the vitamin-B12 independent methionine synthase family. Requires Zn(2+) as cofactor.

It carries out the reaction 5-methyltetrahydropteroyltri-L-glutamate + L-homocysteine = tetrahydropteroyltri-L-glutamate + L-methionine. It participates in amino-acid biosynthesis; L-methionine biosynthesis via de novo pathway; L-methionine from L-homocysteine (MetE route): step 1/1. Catalyzes the transfer of a methyl group from 5-methyltetrahydrofolate to homocysteine resulting in methionine formation. This is 5-methyltetrahydropteroyltriglutamate--homocysteine methyltransferase from Neisseria meningitidis serogroup B (strain ATCC BAA-335 / MC58).